The primary structure comprises 802 residues: Xylanase/beta-glucanase (802 aa).

Positions 1 to 31 (MKKSIFKRYAAAVGLMASVLMFTAVPTTSNA) are cleaved as a signal peptide. Residues 32–239 (ADDQKTGKVG…SNGSANVKSI (208 aa)) enclose the GH11 domain. Catalysis depends on Glu-124, which acts as the Nucleophile. Glu-226 (proton donor) is an active-site residue. Positions 245 to 523 (IDIPDPEPIK…SYLEGHDPSK (279 aa)) are b. A CBM-cenC domain is found at 258–404 (NGYYLKENFE…YMDGAYAGVK (147 aa)). 2 disordered regions span residues 414 to 436 (SQSVDPPVTEPTNPTNPTGPSVT) and 533 to 564 (TTTTTTTTTTTSKTTTTTTTTSPAMHGGYRDL). 2 stretches are compositionally biased toward low complexity: residues 419–436 (PPVTEPTNPTNPTGPSVT) and 533–553 (TTTTTTTTTTTSKTTTTTTTT). The Dockerin domain maps to 434–513 (SVTKWGDANC…LIRAISELPE (80 aa)). The interval 524 to 555 (TTTTTTRITTTTTTTTTTTTSKTTTTTTTTSP) is linker. Positions 556-792 (AMHGGYRDLG…WVTYNKNGVQ (237 aa)) constitute a GH16 domain. Glu-684 serves as the catalytic Nucleophile.

It in the N-terminal section; belongs to the glycosyl hydrolase 11 (cellulase G) family. The protein in the C-terminal section; belongs to the glycosyl hydrolase 16 family.

The catalysed reaction is Endohydrolysis of (1-&gt;4)-beta-D-xylosidic linkages in xylans.. It catalyses the reaction Hydrolysis of (1-&gt;4)-beta-D-glucosidic linkages in beta-D-glucans containing (1-&gt;3)- and (1-&gt;4)-bonds.. It functions in the pathway glycan degradation; xylan degradation. Contains two catalytic domains with xylanase and endo-beta-1,3-1,4 glucanase activities. The protein is Xylanase/beta-glucanase (xynD) of Ruminococcus flavefaciens.